The sequence spans 159 residues: NADH-quinone oxidoreductase subunit B (159 aa).

Positions 36, 37, 102, and 132 each coordinate [4Fe-4S] cluster.

The protein belongs to the complex I 20 kDa subunit family. NDH-1 is composed of 14 different subunits. Subunits NuoB, C, D, E, F, and G constitute the peripheral sector of the complex. [4Fe-4S] cluster is required as a cofactor.

Its subcellular location is the cell inner membrane. The enzyme catalyses a quinone + NADH + 5 H(+)(in) = a quinol + NAD(+) + 4 H(+)(out). In terms of biological role, NDH-1 shuttles electrons from NADH, via FMN and iron-sulfur (Fe-S) centers, to quinones in the respiratory chain. Couples the redox reaction to proton translocation (for every two electrons transferred, four hydrogen ions are translocated across the cytoplasmic membrane), and thus conserves the redox energy in a proton gradient. This chain is NADH-quinone oxidoreductase subunit B, found in Verminephrobacter eiseniae (strain EF01-2).